We begin with the raw amino-acid sequence, 1553 residues long: Probable serine/threonine-protein kinase qkgA (1553 aa).

The interval 113–142 (SSSSSSSSTSSSPSLTSSPSSPISTSPPYH) is disordered. 4 LRR repeats span residues 287–309 (NGTF…INMC), 311–333 (QLVE…TELK), 334–356 (FLKN…CNLT), and 357–378 (LLKV…IVEL). Residues 395–619 (SCETWNKVKL…KRLIHESEKS (225 aa)) form the Roc domain. 3 disordered regions span residues 643–696 (NQGR…QQQQ), 955–1019 (ISNS…PSSQ), and 1048–1090 (NQNG…NNNK). 4 stretches are compositionally biased toward low complexity: residues 648-675 (SISN…TSKK), 683-696 (SQQQ…QQQQ), 956-1018 (SNST…SPSS), and 1059-1090 (TTTT…NNNK). The 200-residue stretch at 694-893 (QQQLQQSIKE…KTYWKDGVLL (200 aa)) folds into the COR domain. The 305-residue stretch at 1242–1546 (ILYERQIGEG…QTSYFDSPFL (305 aa)) folds into the Protein kinase domain. ATP-binding positions include 1248–1256 (IGEGGFGLI) and K1271. The active-site Proton acceptor is the D1393.

This sequence belongs to the protein kinase superfamily. TKL Ser/Thr protein kinase family. ROCO subfamily.

It catalyses the reaction L-seryl-[protein] + ATP = O-phospho-L-seryl-[protein] + ADP + H(+). The catalysed reaction is L-threonyl-[protein] + ATP = O-phospho-L-threonyl-[protein] + ADP + H(+). Involved in growth, and during development, in aggregation. The polypeptide is Probable serine/threonine-protein kinase qkgA (qkgA-1) (Dictyostelium discoideum (Social amoeba)).